The primary structure comprises 37 residues: MKVNPSVKPICDKCRLIRRHGRVMVICSDPRHKQRQG.

Belongs to the bacterial ribosomal protein bL36 family.

In Mycobacterium tuberculosis (strain ATCC 25618 / H37Rv), this protein is Large ribosomal subunit protein bL36 (rpmJ).